A 379-amino-acid polypeptide reads, in one-letter code: Ribosomal RNA small subunit methyltransferase H (379 aa).

S-adenosyl-L-methionine is bound by residues 71 to 73 (GGH), Glu-90, Asp-157, and His-164.

It belongs to the methyltransferase superfamily. RsmH family.

Its subcellular location is the cytoplasm. It carries out the reaction cytidine(1402) in 16S rRNA + S-adenosyl-L-methionine = N(4)-methylcytidine(1402) in 16S rRNA + S-adenosyl-L-homocysteine + H(+). Specifically methylates the N4 position of cytidine in position 1402 (C1402) of 16S rRNA. The chain is Ribosomal RNA small subunit methyltransferase H from Treponema pallidum (strain Nichols).